The primary structure comprises 266 residues: Gap junction beta-4 protein (266 aa).

The stretch at 2 to 13 is an intramembrane region; that stretch reads NWAFLQGLLSGV. The Cytoplasmic portion of the chain corresponds to 14–20; the sequence is NKYSTVL. The chain crosses the membrane as a helical span at residues 21-40; the sequence is SRIWLSVVFIFRVLVYVVAA. Residues 41 to 73 lie on the Extracellular side of the membrane; sequence EEVWDDEQKDFVCNTKQPGCPNVCYDEFFPVSH. Cystine bridges form between C53/C175, C60/C169, and C64/C164. Residues 74-94 traverse the membrane as a helical segment; sequence VRLWALQLILVTCPSLLVVMH. Topologically, residues 95–130 are cytoplasmic; the sequence is VAYREERERKHHLKHGPNAPSLYDNLSKKRGGLWWT. A helical membrane pass occupies residues 131-151; the sequence is YLLSLIFKAAVDAGFLYIFHR. The Extracellular portion of the chain corresponds to 152–184; the sequence is LYKDYDMPRVVACSVEPCPHTVDCYISRPTEKK. The chain crosses the membrane as a helical span at residues 185-205; sequence VFTYFMVTTAAICILLNLSEV. The Cytoplasmic portion of the chain corresponds to 206 to 266; the sequence is FYLVGKRCME…SAPVDAGGYP (61 aa).

This sequence belongs to the connexin family. Beta-type (group I) subfamily. A hemichannel or connexon is composed of a hexamer of connexins. A functional gap junction is formed by the apposition of two hemichannels. Forms heteromeric channels with GJB2.

The protein localises to the cell membrane. It is found in the cell junction. Its subcellular location is the gap junction. Structural component of gap junctions. Gap junctions are dodecameric channels that connect the cytoplasm of adjoining cells. They are formed by the docking of two hexameric hemichannels, one from each cell membrane. Small molecules and ions diffuse from one cell to a neighboring cell via the central pore. This Homo sapiens (Human) protein is Gap junction beta-4 protein (GJB4).